Consider the following 490-residue polypeptide: Ribulose bisphosphate carboxylase large chain (490 aa).

2 residues coordinate substrate: Asn127 and Thr177. Lys179 (proton acceptor) is an active-site residue. Lys181 is a binding site for substrate. Mg(2+) is bound by residues Lys205, Asp207, and Glu208. Lys205 carries the post-translational modification N6-carboxylysine. His297 functions as the Proton acceptor in the catalytic mechanism. Substrate is bound by residues Arg298, His330, and Ser382.

This sequence belongs to the RuBisCO large chain family. Type I subfamily. Heterohexadecamer of 8 large chains and 8 small chains. The cofactor is Mg(2+).

It is found in the plastid. It localises to the chloroplast. The catalysed reaction is 2 (2R)-3-phosphoglycerate + 2 H(+) = D-ribulose 1,5-bisphosphate + CO2 + H2O. It catalyses the reaction D-ribulose 1,5-bisphosphate + O2 = 2-phosphoglycolate + (2R)-3-phosphoglycerate + 2 H(+). Its function is as follows. RuBisCO catalyzes two reactions: the carboxylation of D-ribulose 1,5-bisphosphate, the primary event in carbon dioxide fixation, as well as the oxidative fragmentation of the pentose substrate in the photorespiration process. Both reactions occur simultaneously and in competition at the same active site. The chain is Ribulose bisphosphate carboxylase large chain from Phaeodactylum tricornutum (strain CCAP 1055/1).